Here is a 419-residue protein sequence, read N- to C-terminus: Zinc finger protein Pegasus (419 aa).

Lys-5 is covalently cross-linked (Glycyl lysine isopeptide (Lys-Gly) (interchain with G-Cter in SUMO2)). 3 C2H2-type zinc fingers span residues 82 to 104, 110 to 132, and 138 to 161; these read LKCR…IRIH, HRCH…MRSH, and YKCE…RRKH. Residue Lys-185 forms a Glycyl lysine isopeptide (Lys-Gly) (interchain with G-Cter in SUMO2) linkage. Composition is skewed to polar residues over residues 223–236 and 262–273; these read QTDS…TTPT and LSSLPPENQNPA. Disordered stretches follow at residues 223–247 and 262–356; these read QTDS…QELM and LSSL…PALP. Low complexity predominate over residues 290–311; the sequence is QPSTQAVVSAVSASIPQSSSPT. Residues 332-349 are compositionally biased toward polar residues; the sequence is SEPSAHTSTPSIGNSQPS. 2 C2H2-type zinc fingers span residues 364–386 and 392–416; these read HHCQ…MGCH and FQCN…RGQH.

This sequence belongs to the Ikaros C2H2-type zinc-finger protein family. In terms of assembly, self-associates. Interacts with other family members; IKZF1, IKZF2, IKZF3 and IKZF4. Expressed in brain, heart, skeletal muscle, kidney, and liver. Expressed in the hematopoietic cell lines MOLT-4, NALM-6 and K-562. Highly expressed in THP-1 and M-07e cell lines, which have characteristics of myeloid and early megakaryocytic cells respectively.

The protein localises to the nucleus. In terms of biological role, transcriptional repressor that binds the core 5'GNNTGTNG-3' DNA consensus sequence. Involved in megakaryocyte differentiation. This Homo sapiens (Human) protein is Zinc finger protein Pegasus (IKZF5).